The sequence spans 432 residues: Cytochrome c biogenesis protein CcsB (432 aa).

3 helical membrane-spanning segments follow: residues 18 to 38 (LRLAIVLLLLIALASAVGTGI), 76 to 96 (SGWFLALLAWLGLALILCSWR), and 166 to 186 (VGPLLVHTGLVLLMLGAAWGA).

It belongs to the Ccs1/CcsB family. As to quaternary structure, may interact with CcsA.

It localises to the cellular thylakoid membrane. Required during biogenesis of c-type cytochromes (cytochrome c6 and cytochrome f) at the step of heme attachment. The chain is Cytochrome c biogenesis protein CcsB from Synechococcus sp. (strain CC9605).